A 375-amino-acid chain; its full sequence is Fluoride export protein 1 (375 aa).

Over 1 to 11 (MIFNPVISNHK) the chain is Cytoplasmic. The helical transmembrane segment at 12 to 32 (LSHYIHVFCTFTTFCILGTET) threads the bilayer. Over 33–34 (RQ) the chain is Extracellular. The chain crosses the membrane as a helical span at residues 35–55 (AITALSTYTPAFVTAPTVLWS). At 56 to 79 (NCSSCMLMGIMQSLNAYTWMKDHQ) the chain is on the cytoplasmic side. A helical membrane pass occupies residues 80–100 (VLFLGVTTGYCGALSSFSSML). Residues 101 to 127 (LEMFEHSTNLTNGNIANHTKLPNRAYG) are Extracellular-facing. Asparagine 109 and asparagine 117 each carry an N-linked (GlcNAc...) asparagine glycan. A helical membrane pass occupies residues 128-148 (IMEFLSVLLVHLMVSMGSLIF). Residues 149-213 (GRQLGKEVIV…FKKFFDIVDK (65 aa)) are Cytoplasmic-facing. The helical transmembrane segment at 214-234 (LAYALAFPLIILFVVLCAYYE) threads the bilayer. The N-linked (GlcNAc...) asparagine glycan is linked to asparagine 235. The Extracellular portion of the chain corresponds to 235–241 (NYSRGKW). Residues 242 to 262 (TLPCLFGIFAGFLRYWLAEMF) traverse the membrane as a helical segment. Topologically, residues 263–268 (NKTNKK) are cytoplasmic. Residues 269–289 (FPLGTFLANVFATLLIGIFTM) traverse the membrane as a helical segment. At 290-310 (VQRGKKHFSTDVPIVNSLNSC) the chain is on the extracellular side. The chain crosses the membrane as a helical span at residues 311–331 (HIVSALISGFCGTLSTISTFI). Over 332 to 338 (NEGYKLS) the chain is Cytoplasmic. The helical transmembrane segment at 339–359 (FINMLIYYTVSIAISYCLLVI) threads the bilayer. Over 360–375 (TLGSYAWTRGLTNPIC) the chain is Extracellular.

It belongs to the fluoride channel Fluc/FEX (TC 1.A.43) family.

It is found in the cell membrane. The enzyme catalyses fluoride(in) = fluoride(out). Functionally, fluoride channel required for the rapid expulsion of cytoplasmic fluoride. The polypeptide is Fluoride export protein 1 (Saccharomyces cerevisiae (strain ATCC 204508 / S288c) (Baker's yeast)).